Here is a 469-residue protein sequence, read N- to C-terminus: Adenosylhomocysteinase (469 aa).

Substrate-binding residues include threonine 58, aspartate 133, and glutamate 195. 196 to 198 (TTT) is an NAD(+) binding site. The substrate site is built by lysine 225 and aspartate 229. NAD(+) is bound by residues asparagine 230, 259 to 264 (GFGDVG), glutamate 282, asparagine 317, 338 to 340 (IGH), and asparagine 383.

Belongs to the adenosylhomocysteinase family. Requires NAD(+) as cofactor.

The protein resides in the cytoplasm. The catalysed reaction is S-adenosyl-L-homocysteine + H2O = L-homocysteine + adenosine. Its pathway is amino-acid biosynthesis; L-homocysteine biosynthesis; L-homocysteine from S-adenosyl-L-homocysteine: step 1/1. In terms of biological role, may play a key role in the regulation of the intracellular concentration of adenosylhomocysteine. This is Adenosylhomocysteinase from Rhodopseudomonas palustris (strain TIE-1).